A 467-amino-acid chain; its full sequence is MKNFNRRAFLKAAGATTAGLVTSGLILPASAQPQKMPPKPSNGKSVMGLISPKLSTVRVGFIGVGQRGYGHVKHFCHLEGVEIKAICDTDPAVLDRAIDFVVEQGLAKPNAYTGSEHTYRDMLQRDDIDIAIISTPWQWHAPMAIDTMENDKHAFVEVPLAMSVEECWQIVDTAERTQKNCMMMENVNYGRDELMVLNMVRQGVFGELIHGEAAYIHELRWQMKELESKTGSWRTHWHTKRNGNLYPTHGLGPVSQYMNINRGDRFDYLTSMSSPALGRALYAKREFPADHERNQLNYINGDMSTSLIKTVKGRTIMVQHDTTTPRPYSRHNLIQGTNGVFAGFPNRIALEQSPFERDEKGGESFHRWDMDMTRWYDKYDHPLWQQMGKEAERNGGHGGMDFLMLWRMVYCLRNAEPLDQDVYDGAAWSVVNILSEESVNNRSNSVTFPDFTRGAWKTGKPLGIVGA.

The tat-type signal signal peptide spans 1–31 (MKNFNRRAFLKAAGATTAGLVTSGLILPASA). Residues 66–67 (QR), Asp88, 137–140 (WQWH), 157–158 (EV), and Asn186 contribute to the NAD(+) site. Substrate contacts are provided by residues Tyr215, Arg234, 246–249 (YPTH), and Tyr328. An NAD(+)-binding site is contributed by Tyr246.

Belongs to the Gfo/Idh/MocA family. Glycosyl hydrolase 109 subfamily. Requires NAD(+) as cofactor. In terms of processing, predicted to be exported by the Tat system. The position of the signal peptide cleavage has not been experimentally proven.

Its function is as follows. Glycosidase. This Shewanella woodyi (strain ATCC 51908 / MS32) protein is Glycosyl hydrolase family 109 protein.